Consider the following 256-residue polypeptide: Thiazole synthase (256 aa).

K95 serves as the catalytic Schiff-base intermediate with DXP. Residues G156, 182–183 (AG), and 204–205 (NT) contribute to the 1-deoxy-D-xylulose 5-phosphate site.

It belongs to the ThiG family. As to quaternary structure, homotetramer. Forms heterodimers with either ThiH or ThiS.

It is found in the cytoplasm. The catalysed reaction is [ThiS sulfur-carrier protein]-C-terminal-Gly-aminoethanethioate + 2-iminoacetate + 1-deoxy-D-xylulose 5-phosphate = [ThiS sulfur-carrier protein]-C-terminal Gly-Gly + 2-[(2R,5Z)-2-carboxy-4-methylthiazol-5(2H)-ylidene]ethyl phosphate + 2 H2O + H(+). It functions in the pathway cofactor biosynthesis; thiamine diphosphate biosynthesis. In terms of biological role, catalyzes the rearrangement of 1-deoxy-D-xylulose 5-phosphate (DXP) to produce the thiazole phosphate moiety of thiamine. Sulfur is provided by the thiocarboxylate moiety of the carrier protein ThiS. In vitro, sulfur can be provided by H(2)S. The chain is Thiazole synthase from Escherichia coli O7:K1 (strain IAI39 / ExPEC).